A 196-amino-acid polypeptide reads, in one-letter code: Carnitine operon protein CaiE (196 aa).

The disordered stretch occupies residues 173–196 (TQPLRQMEENRPRLQGTTDVTPKR). Polar residues predominate over residues 187–196 (QGTTDVTPKR).

This sequence belongs to the transferase hexapeptide repeat family.

Its pathway is amine and polyamine metabolism; carnitine metabolism. Overproduction of CaiE stimulates the activity of CaiB and CaiD. The sequence is that of Carnitine operon protein CaiE from Shigella flexneri serotype 5b (strain 8401).